The following is a 147-amino-acid chain: Probable cytidine deaminase (147 aa).

The CMP/dCMP-type deaminase domain maps to 4–130; it reads EELEKCIDAA…KLLPGLFSQE (127 aa). 45 to 51 serves as a coordination point for substrate; it reads NVENSSY. Cysteine 56 is a Zn(2+) binding site. Glutamate 58 serves as the catalytic Proton donor. Zn(2+)-binding residues include cysteine 90 and cysteine 93.

It belongs to the cytidine and deoxycytidylate deaminase family. Requires Zn(2+) as cofactor.

The catalysed reaction is cytidine + H2O + H(+) = uridine + NH4(+). The enzyme catalyses 2'-deoxycytidine + H2O + H(+) = 2'-deoxyuridine + NH4(+). In terms of biological role, this enzyme scavenges exogenous and endogenous cytidine and 2'-deoxycytidine for UMP synthesis. The protein is Probable cytidine deaminase (cda) of Dictyostelium discoideum (Social amoeba).